We begin with the raw amino-acid sequence, 221 residues long: MIYIFTMVFSLNVLILSSSAARYDYFQFTQQYQQAFCNSNPTPCKDPPDKLFTVHGLWPSTKVGRDPEYCKTKRYRKIQRLEPQLEIIWPNVSDRKANRGFWRKQWYKHGSCASPALPNQKHYFETVIRMFLAEKQNVSRILSMATIEPEGKNRTLLEIQNAIRAGTNNMIPKLKCQKVNGMTELVEVTLCHDSNLTQFINCPRPLPQASPYFCPIDDIQY.

The signal sequence occupies residues 1 to 20 (MIYIFTMVFSLNVLILSSSA). RNA is bound at residue Q31. Residues C37 and C44 are joined by a disulfide bond. RNA-binding positions include H55, 91 to 92 (NV), F101, 104 to 105 (KQ), and 108 to 109 (KH). Residue H55 is the Proton donor of the active site. A disulfide bridge connects residues C70 and C112. N91 carries an N-linked (GlcNAc...) asparagine glycan. Residue Q105 is part of the active site. The active-site Proton acceptor is the H109. 3 N-linked (GlcNAc...) asparagine glycosylation sites follow: N137, N153, and N195. 2 disulfides stabilise this stretch: C176–C214 and C191–C202.

The protein belongs to the RNase T2 family. In terms of processing, N-linked core structure at Asn-91, Asn-137, and Asn-153 contains xylose and at Asn-195 contains xylose and fucose.

It localises to the secreted. The protein resides in the extracellular space. It carries out the reaction a ribonucleotidyl-ribonucleotide-RNA + H2O = a 3'-end 3'-phospho-ribonucleotide-RNA + a 5'-end dephospho-ribonucleoside-RNA + H(+). In terms of biological role, self-incompatibility (SI) is the inherited ability of a flowering plant to prevent self-fertilization by discriminating between self and non-self pollen during pollination. In many species, self-incompatibility is controlled by the single, multiallelic locus S. This Pyrus pyrifolia (Chinese pear) protein is Ribonuclease S-2.